The sequence spans 736 residues: Catalase-1 (736 aa).

The tract at residues Met-1–Lys-29 is disordered. Position 89 (Arg-89) interacts with heme. His-92 is a catalytic residue. Heme is bound at residue Arg-129. Asn-165 is a catalytic residue. Residues Phe-178, Arg-375, Tyr-379, and Arg-386 each contribute to the heme site. A cross-link (3-(S-cysteinyl)-tyrosine (Cys-Tyr)) is located at residues Cys-356–Tyr-379.

It belongs to the catalase family. In terms of assembly, homotetramer. Heme serves as cofactor. Glycosylated; with alpha-glucose and/or alpha-mannose.

Its subcellular location is the secreted. The protein resides in the cell wall. The enzyme catalyses 2 H2O2 = O2 + 2 H2O. Occurs in almost all aerobically respiring organisms and serves to protect cells from the toxic effects of hydrogen peroxide. The sequence is that of Catalase-1 (cat-1) from Neurospora crassa (strain ATCC 24698 / 74-OR23-1A / CBS 708.71 / DSM 1257 / FGSC 987).